Here is a 350-residue protein sequence, read N- to C-terminus: MVFRIASSPYTHNQRQTSRIMLLVLLAAVPGIVVQTWFFGWGTVLQIVLAALTAWATEAAILKLRKQHIVATLKDNSALLTGLLLAVSIPPLAPWWMVVLGTAFAVVIAKQLYGGLGHNPFNPAMIGYVVLLISFPVQMTSWLPSYEIAAQVPAFSDVLQMIFTGHTAAGGDMASLRLGIDGISQATPLDTFKTSLHAGHSVQQVLQLPVYGGVLAGLGWQWVNIAWLAGGLFLLWQKAIRWHIPVSFLLSLGLCATLGWLFSPHSLASPQMHLFSGATMLGAFFILTDPVTASTTNRGRLIFGALAGLLVWLIRSFGGYPDGVAFAVLLANITVPLIDYYTRPRVYGHR.

Helical transmembrane passes span 20 to 40 (IMLL…WFFG), 42 to 62 (GTVL…AAIL), 89 to 109 (IPPL…VVIA), and 123 to 143 (PAMI…TSWL). Thr-187 carries the FMN phosphoryl threonine modification. Transmembrane regions (helical) follow at residues 214–234 (VLAG…GLFL), 242–262 (WHIP…GWLF), 267–287 (LASP…FFIL), 301–321 (LIFG…GGYP), and 322–342 (DGVA…DYYT).

Belongs to the NqrB/RnfD family. The complex is composed of six subunits: RnfA, RnfB, RnfC, RnfD, RnfE and RnfG. The cofactor is FMN.

The protein resides in the cell inner membrane. Its function is as follows. Part of a membrane-bound complex that couples electron transfer with translocation of ions across the membrane. The protein is Ion-translocating oxidoreductase complex subunit D of Klebsiella pneumoniae (strain 342).